A 251-amino-acid chain; its full sequence is Triosephosphate isomerase (251 aa).

Residues N12 and K14 each coordinate substrate. The active-site Electrophile is H96. E168 serves as the catalytic Proton acceptor.

This sequence belongs to the triosephosphate isomerase family. As to quaternary structure, homodimer.

The protein localises to the cytoplasm. It is found in the glycosome. The catalysed reaction is D-glyceraldehyde 3-phosphate = dihydroxyacetone phosphate. Its pathway is carbohydrate biosynthesis; gluconeogenesis. The protein operates within carbohydrate degradation; glycolysis; D-glyceraldehyde 3-phosphate from glycerone phosphate: step 1/1. This is Triosephosphate isomerase from Leishmania mexicana.